A 30-amino-acid chain; its full sequence is Cycloviolin-D (30 aa).

The cyclopeptide (Gly-Asn) cross-link spans 1–30 (GFPCGESCVFIPCISAAIGCSCKNKVCYRN). 3 disulfides stabilise this stretch: Cys4–Cys20, Cys8–Cys22, and Cys13–Cys27.

In terms of processing, this is a cyclic peptide.

Functionally, probably participates in a plant defense mechanism. Has anti-HIV activity. The sequence is that of Cycloviolin-D from Leonia cymosa (Sacha uba).